We begin with the raw amino-acid sequence, 183 residues long: Hypoxanthine/guanine phosphoribosyltransferase (183 aa).

Belongs to the purine/pyrimidine phosphoribosyltransferase family. Archaeal HPRT subfamily. Homodimer.

The protein localises to the cytoplasm. The catalysed reaction is IMP + diphosphate = hypoxanthine + 5-phospho-alpha-D-ribose 1-diphosphate. It carries out the reaction GMP + diphosphate = guanine + 5-phospho-alpha-D-ribose 1-diphosphate. The protein operates within purine metabolism; IMP biosynthesis via salvage pathway; IMP from hypoxanthine: step 1/1. Catalyzes a salvage reaction resulting in the formation of IMP that is energically less costly than de novo synthesis. The polypeptide is Hypoxanthine/guanine phosphoribosyltransferase (Methanocaldococcus jannaschii (strain ATCC 43067 / DSM 2661 / JAL-1 / JCM 10045 / NBRC 100440) (Methanococcus jannaschii)).